We begin with the raw amino-acid sequence, 401 residues long: Ornithine aminotransferase (401 aa).

Position 258 is an N6-(pyridoxal phosphate)lysine (K258).

Belongs to the class-III pyridoxal-phosphate-dependent aminotransferase family. OAT subfamily. Pyridoxal 5'-phosphate is required as a cofactor.

The protein resides in the cytoplasm. The catalysed reaction is a 2-oxocarboxylate + L-ornithine = L-glutamate 5-semialdehyde + an L-alpha-amino acid. Its pathway is amino-acid biosynthesis; L-proline biosynthesis; L-glutamate 5-semialdehyde from L-ornithine: step 1/1. Functionally, catalyzes the interconversion of ornithine to glutamate semialdehyde. This chain is Ornithine aminotransferase, found in Bacillus subtilis (strain 168).